Reading from the N-terminus, the 354-residue chain is Trans-3-hydroxy-L-proline dehydratase (354 aa).

Residue Cys104 is the Proton acceptor of the active site. Residues 105-106, Asp269, and 274-275 contribute to the substrate site; these read GH and GS.

The protein belongs to the proline racemase family. In terms of assembly, homodimer. Ubiquitously expressed.

The enzyme catalyses trans-3-hydroxy-L-proline = 1-pyrroline-2-carboxylate + H2O. Its function is as follows. Catalyzes the dehydration of trans-3-hydroxy-L-proline to Delta(1)-pyrroline-2-carboxylate (Pyr2C). May be required to degrade trans-3-hydroxy-L-proline from the diet and originating from the degradation of proteins such as collagen-IV that contain it. The chain is Trans-3-hydroxy-L-proline dehydratase (L3HYPDH) from Homo sapiens (Human).